Here is a 510-residue protein sequence, read N- to C-terminus: Maturase K (510 aa).

This sequence belongs to the intron maturase 2 family. MatK subfamily.

It is found in the plastid. Its subcellular location is the chloroplast. Usually encoded in the trnK tRNA gene intron. Probably assists in splicing its own and other chloroplast group II introns. This Cestrum elegans (Red cestrum) protein is Maturase K.